The following is a 237-amino-acid chain: Uridylate kinase (237 aa).

An ATP-binding site is contributed by 9–12 (KLSG). The involved in allosteric activation by GTP stretch occupies residues 17 to 22 (GSQGYG). UMP is bound at residue Gly-51. ATP contacts are provided by Gly-52 and Arg-56. Residues Asp-71 and 132-139 (CGNPFFTT) each bind UMP. Residues Thr-159, Tyr-165, and Asp-168 each contribute to the ATP site.

The protein belongs to the UMP kinase family. In terms of assembly, homohexamer.

The protein localises to the cytoplasm. The enzyme catalyses UMP + ATP = UDP + ADP. It functions in the pathway pyrimidine metabolism; CTP biosynthesis via de novo pathway; UDP from UMP (UMPK route): step 1/1. With respect to regulation, allosterically activated by GTP. Inhibited by UTP. In terms of biological role, catalyzes the reversible phosphorylation of UMP to UDP. The sequence is that of Uridylate kinase from Synechococcus sp. (strain CC9902).